We begin with the raw amino-acid sequence, 340 residues long: CRISPR system Cmr subunit Cmr6 (340 aa).

It belongs to the CRISPR system Cmr6 family. Part of the type III-B Cmr ribonucleoprotein (RNP) complex, an elongated RNP with Cmr2 and Cmr3 as the base, with Cmr4 and Cmr5 forming a helical core along the mature crRNA (39 or 45 nt in length), while the complex is capped by Cmr6 and Cmr1. The 5' end of the crRNA is bound to Cmr2 and Cmr3, while Cmr6 and a Cmr1 subunit (Cmr1-1 or Cmr1-2) cap the 3' end of the crRNA. The target RNA lies antiparallel to the crRNA, with its 5' end near Cmr1 and Cmr6 and its 3' end near Cmr2 and Cmr3; major target cleavage occurs nears the junction of Cmr1/Cmr6 and Cmr4/Cmr, with minor cleavage occurring at 6 nt intervals which coincide with the proposed spacing of Cmr4 subunits. Interacts with Cmr4 and Cmr5.

The protein resides in the cytoplasm. CRISPR (clustered regularly interspaced short palindromic repeat), is an adaptive immune system that provides protection against mobile genetic elements (viruses, transposable elements and conjugative plasmids). CRISPR clusters contain sequences complementary to antecedent mobile elements and target invading nucleic acids. CRISPR clusters are transcribed and processed into CRISPR RNA (crRNA), formerly called psiRNA (prokaryotic silencing) in this organism. Part of the Cmr ribonucleoprotein complex which has divalent cation-dependent endoribonuclease activity specific for ssRNA complementary to the crRNA (target RNA), generating 5' hydroxy- and 3' phosphate or 2'-3' cyclic phosphate termini. Cmr4 is probably the subunit that cleaves target RNA. Cmr complex does not cleave ssDNA complementary to the crRNA. Cleavage of invading RNA is guided by the crRNA; substrate cleavage occurs a fixed distance (14 nt) from the 3' end of the crRNA. In vitro reconstitution shows Cmr1-2 and Cmr5 are not absolutely necessary for target cleavage. The protein is CRISPR system Cmr subunit Cmr6 of Pyrococcus furiosus (strain ATCC 43587 / DSM 3638 / JCM 8422 / Vc1).